Here is a 272-residue protein sequence, read N- to C-terminus: tRNA pseudouridine synthase B (272 aa).

D38 serves as the catalytic Nucleophile.

Belongs to the pseudouridine synthase TruB family. Type 1 subfamily.

It catalyses the reaction uridine(55) in tRNA = pseudouridine(55) in tRNA. Functionally, responsible for synthesis of pseudouridine from uracil-55 in the psi GC loop of transfer RNAs. The polypeptide is tRNA pseudouridine synthase B (Campylobacter jejuni subsp. jejuni serotype O:6 (strain 81116 / NCTC 11828)).